The primary structure comprises 244 residues: tRNA (guanine-N(7)-)-methyltransferase (244 aa).

The interval 1–24 (MTDSHVPHPESPAVEEGEERPHRR) is disordered. S-adenosyl-L-methionine-binding residues include glutamate 74, glutamate 99, aspartate 126, and aspartate 149. Aspartate 149 is a catalytic residue. Residues lysine 153, aspartate 185, and 222-225 (TKFE) each bind substrate.

This sequence belongs to the class I-like SAM-binding methyltransferase superfamily. TrmB family.

The enzyme catalyses guanosine(46) in tRNA + S-adenosyl-L-methionine = N(7)-methylguanosine(46) in tRNA + S-adenosyl-L-homocysteine. It functions in the pathway tRNA modification; N(7)-methylguanine-tRNA biosynthesis. In terms of biological role, catalyzes the formation of N(7)-methylguanine at position 46 (m7G46) in tRNA. This chain is tRNA (guanine-N(7)-)-methyltransferase, found in Pseudomonas syringae pv. syringae (strain B728a).